The primary structure comprises 433 residues: tRNA-2-methylthio-N(6)-dimethylallyladenosine synthase (433 aa).

The region spanning 3-118 (KRLYIETLGC…IRDVIKQEKA (116 aa)) is the MTTase N-terminal domain. [4Fe-4S] cluster is bound by residues C12, C49, C81, C150, C154, and C157. The Radical SAM core domain occupies 136–371 (RTSPYKAFIN…LHLQMLDSIS (236 aa)). A TRAM domain is found at 372–433 (EQEKDKVYEV…RLSLEGELVG (62 aa)).

This sequence belongs to the methylthiotransferase family. MiaB subfamily. In terms of assembly, monomer. [4Fe-4S] cluster serves as cofactor.

The protein resides in the cytoplasm. The catalysed reaction is N(6)-dimethylallyladenosine(37) in tRNA + (sulfur carrier)-SH + AH2 + 2 S-adenosyl-L-methionine = 2-methylsulfanyl-N(6)-dimethylallyladenosine(37) in tRNA + (sulfur carrier)-H + 5'-deoxyadenosine + L-methionine + A + S-adenosyl-L-homocysteine + 2 H(+). Its function is as follows. Catalyzes the methylthiolation of N6-(dimethylallyl)adenosine (i(6)A), leading to the formation of 2-methylthio-N6-(dimethylallyl)adenosine (ms(2)i(6)A) at position 37 in tRNAs that read codons beginning with uridine. The chain is tRNA-2-methylthio-N(6)-dimethylallyladenosine synthase from Nitratiruptor sp. (strain SB155-2).